The following is a 448-amino-acid chain: N-succinylarginine dihydrolase (448 aa).

Residues 19–28 (AGLSSGNIAS), Asn110, and 137–138 (HR) contribute to the substrate site. The active site involves Glu174. Arg216 contributes to the substrate binding site. The active site involves His252. Positions 254 and 366 each coordinate substrate. Cys372 serves as the catalytic Nucleophile.

Belongs to the succinylarginine dihydrolase family. In terms of assembly, homodimer.

It carries out the reaction N(2)-succinyl-L-arginine + 2 H2O + 2 H(+) = N(2)-succinyl-L-ornithine + 2 NH4(+) + CO2. It functions in the pathway amino-acid degradation; L-arginine degradation via AST pathway; L-glutamate and succinate from L-arginine: step 2/5. In terms of biological role, catalyzes the hydrolysis of N(2)-succinylarginine into N(2)-succinylornithine, ammonia and CO(2). In Legionella pneumophila (strain Paris), this protein is N-succinylarginine dihydrolase.